The following is a 321-amino-acid chain: Ribosomal protein L11 methyltransferase (321 aa).

Thr150, Gly171, Asp193, and Asn256 together coordinate S-adenosyl-L-methionine.

This sequence belongs to the methyltransferase superfamily. PrmA family.

The protein localises to the cytoplasm. The catalysed reaction is L-lysyl-[protein] + 3 S-adenosyl-L-methionine = N(6),N(6),N(6)-trimethyl-L-lysyl-[protein] + 3 S-adenosyl-L-homocysteine + 3 H(+). Methylates ribosomal protein L11. The sequence is that of Ribosomal protein L11 methyltransferase from Herpetosiphon aurantiacus (strain ATCC 23779 / DSM 785 / 114-95).